The chain runs to 447 residues: Cysteine--tRNA ligase (447 aa).

C28 contributes to the Zn(2+) binding site. Residues 30–40 (PTVYNYIHIGN) carry the 'HIGH' region motif. Positions 211, 236, and 240 each coordinate Zn(2+). The short motif at 268–272 (KMSKS) is the 'KMSKS' region element. K271 provides a ligand contact to ATP.

Belongs to the class-I aminoacyl-tRNA synthetase family. As to quaternary structure, monomer. It depends on Zn(2+) as a cofactor.

The protein localises to the cytoplasm. It carries out the reaction tRNA(Cys) + L-cysteine + ATP = L-cysteinyl-tRNA(Cys) + AMP + diphosphate. The polypeptide is Cysteine--tRNA ligase (Streptococcus agalactiae serotype III (strain NEM316)).